We begin with the raw amino-acid sequence, 202 residues long: Small ribosomal subunit protein uS4 (202 aa).

The span at 1 to 13 (MSRYRGPRLRVTR) shows a compositional bias: basic residues. Positions 1–42 (MSRYRGPRLRVTRRLGELPGLTRKASKKSNPPGQHGQARRKR) are disordered. One can recognise an S4 RNA-binding domain in the interval 90 to 152 (NRLDNVCFRL…KASKKLVEGN (63 aa)).

The protein belongs to the universal ribosomal protein uS4 family. In terms of assembly, part of the 30S ribosomal subunit. Contacts protein S5. The interaction surface between S4 and S5 is involved in control of translational fidelity.

Its function is as follows. One of the primary rRNA binding proteins, it binds directly to 16S rRNA where it nucleates assembly of the body of the 30S subunit. With S5 and S12 plays an important role in translational accuracy. This is Small ribosomal subunit protein uS4 from Prochlorococcus marinus (strain MIT 9515).